Here is a 329-residue protein sequence, read N- to C-terminus: DNA-directed RNA polymerase subunit alpha (329 aa).

The tract at residues 1 to 235 is alpha N-terminal domain (alpha-NTD); it reads MQGSVTEFLK…EQLEAFVDLR (235 aa). The segment at 249–329 is alpha C-terminal domain (alpha-CTD); it reads FDPILLRPVD…NWPPASIADE (81 aa).

Belongs to the RNA polymerase alpha chain family. Homodimer. The RNAP catalytic core consists of 2 alpha, 1 beta, 1 beta' and 1 omega subunit. When a sigma factor is associated with the core the holoenzyme is formed, which can initiate transcription.

The catalysed reaction is RNA(n) + a ribonucleoside 5'-triphosphate = RNA(n+1) + diphosphate. Functionally, DNA-dependent RNA polymerase catalyzes the transcription of DNA into RNA using the four ribonucleoside triphosphates as substrates. The chain is DNA-directed RNA polymerase subunit alpha from Sodalis glossinidius (strain morsitans).